Here is a 262-residue protein sequence, read N- to C-terminus: Acyl-[acyl-carrier-protein]--UDP-N-acetylglucosamine O-acyltransferase (262 aa).

The protein belongs to the transferase hexapeptide repeat family. LpxA subfamily. As to quaternary structure, homotrimer.

The protein resides in the cytoplasm. It carries out the reaction a (3R)-hydroxyacyl-[ACP] + UDP-N-acetyl-alpha-D-glucosamine = a UDP-3-O-[(3R)-3-hydroxyacyl]-N-acetyl-alpha-D-glucosamine + holo-[ACP]. It functions in the pathway glycolipid biosynthesis; lipid IV(A) biosynthesis; lipid IV(A) from (3R)-3-hydroxytetradecanoyl-[acyl-carrier-protein] and UDP-N-acetyl-alpha-D-glucosamine: step 1/6. In terms of biological role, involved in the biosynthesis of lipid A, a phosphorylated glycolipid that anchors the lipopolysaccharide to the outer membrane of the cell. The sequence is that of Acyl-[acyl-carrier-protein]--UDP-N-acetylglucosamine O-acyltransferase from Pectobacterium carotovorum subsp. carotovorum (strain PC1).